Here is an 85-residue protein sequence, read N- to C-terminus: U4-theraphotoxin-Hhn1s (85 aa).

Positions 1–22 are cleaved as a signal peptide; it reads MKVTLIAILTCAAVLVLHTTAA. Positions 23–48 are excised as a propeptide; sequence EELEAESQLMEVGMPDTELAAVDEER. Intrachain disulfides connect Cys52/Cys66, Cys56/Cys77, and Cys71/Cys82.

It belongs to the neurotoxin 12 (Hwtx-2) family. 02 (Hwtx-2) subfamily. As to expression, expressed by the venom gland.

It is found in the secreted. In terms of biological role, postsynaptic neurotoxin. This chain is U4-theraphotoxin-Hhn1s, found in Cyriopagopus hainanus (Chinese bird spider).